Here is a 208-residue protein sequence, read N- to C-terminus: Thymidylate kinase (208 aa).

Glycine 10–threonine 17 is an ATP binding site.

Belongs to the thymidylate kinase family.

The enzyme catalyses dTMP + ATP = dTDP + ADP. Functionally, phosphorylation of dTMP to form dTDP in both de novo and salvage pathways of dTTP synthesis. The chain is Thymidylate kinase from Bacillus cereus (strain 03BB102).